Consider the following 270-residue polypeptide: ATP synthase subunit a 1 (270 aa).

5 helical membrane passes run 38–58, 98–118, 143–163, 208–228, and 239–259; these read VHIDSLFFSWFTGLIFLGIFY, IAPLALTIFCWVFLMNVMDLV, DVNITMAMALGVFALMIYYSI, LFGNMFAGEVVFILCAAMLPW, and AIFHILVITIQAFVFMMLTIV.

It belongs to the ATPase A chain family. In terms of assembly, F-type ATPases have 2 components, CF(1) - the catalytic core - and CF(0) - the membrane proton channel. CF(1) has five subunits: alpha(3), beta(3), gamma(1), delta(1), epsilon(1). CF(0) has three main subunits: a(1), b(2) and c(9-12). The alpha and beta chains form an alternating ring which encloses part of the gamma chain. CF(1) is attached to CF(0) by a central stalk formed by the gamma and epsilon chains, while a peripheral stalk is formed by the delta and b chains.

It is found in the cell inner membrane. Functionally, key component of the proton channel; it plays a direct role in the translocation of protons across the membrane. This is ATP synthase subunit a 1 from Vibrio campbellii (strain ATCC BAA-1116).